The following is a 341-amino-acid chain: UDP-3-O-acylglucosamine N-acyltransferase (341 aa).

Catalysis depends on His-241, which acts as the Proton acceptor.

This sequence belongs to the transferase hexapeptide repeat family. LpxD subfamily. In terms of assembly, homotrimer.

It carries out the reaction a UDP-3-O-[(3R)-3-hydroxyacyl]-alpha-D-glucosamine + a (3R)-hydroxyacyl-[ACP] = a UDP-2-N,3-O-bis[(3R)-3-hydroxyacyl]-alpha-D-glucosamine + holo-[ACP] + H(+). The protein operates within bacterial outer membrane biogenesis; LPS lipid A biosynthesis. In terms of biological role, catalyzes the N-acylation of UDP-3-O-acylglucosamine using 3-hydroxyacyl-ACP as the acyl donor. Is involved in the biosynthesis of lipid A, a phosphorylated glycolipid that anchors the lipopolysaccharide to the outer membrane of the cell. This Saccharophagus degradans (strain 2-40 / ATCC 43961 / DSM 17024) protein is UDP-3-O-acylglucosamine N-acyltransferase.